The sequence spans 540 residues: CBL-interacting protein kinase 12 (540 aa).

Positions 1–23 are disordered; the sequence is MLMATVSPARREPTPQAVRASPM. A Protein kinase domain is found at 46–300; that stretch reads YELGRVLGQG…VPEIIESDWF (255 aa). ATP-binding positions include 52–60 and Lys75; that span reads LGQGSFAKV. The active-site Proton acceptor is Asp168. Residues 186–215 form an activation loop region; sequence DFGLAAGPDQFDPDGLLHTFCGTPAYVAPE. The segment covering 333–348 has biased composition (pro residues); sequence PPPLGLAPPVPPPPQG. The interval 333-380 is disordered; it reads PPPLGLAPPVPPPPQGDDPDGSGSESDSSVVSCPATLSTGESQRVRGS. The segment covering 353–364 has biased composition (low complexity); that stretch reads GSGSESDSSVVS. Positions 370–406 constitute an NAF domain; that stretch reads STGESQRVRGSLPRPASLNAFDIISFSKGFNLSGLFE. The segment at 409-438 is PPI; the sequence is GNEIRFVSGEPMSDIVKKLEEIAKVKSFTV.

The protein belongs to the protein kinase superfamily. CAMK Ser/Thr protein kinase family. SNF1 subfamily. Requires Mg(2+) as cofactor. Post-translationally, autophosphorylated. In terms of tissue distribution, expressed at low levels in leaf blades.

It carries out the reaction L-seryl-[protein] + ATP = O-phospho-L-seryl-[protein] + ADP + H(+). The catalysed reaction is L-threonyl-[protein] + ATP = O-phospho-L-threonyl-[protein] + ADP + H(+). In terms of biological role, involved in drought stress tolerance. CIPK serine-threonine protein kinases interact with CBL proteins. Binding of a CBL protein to the regulatory NAF domain of CIPK protein lead to the activation of the kinase in a calcium-dependent manner. The polypeptide is CBL-interacting protein kinase 12 (CIPK12) (Oryza sativa subsp. japonica (Rice)).